Here is a 463-residue protein sequence, read N- to C-terminus: Trigger factor (463 aa).

Residues Gly162–Pro243 form the PPIase FKBP-type domain. Positions Thr427–Ala463 are disordered. Residues Val432 to Ser442 show a composition bias toward acidic residues.

It belongs to the FKBP-type PPIase family. Tig subfamily.

It is found in the cytoplasm. It carries out the reaction [protein]-peptidylproline (omega=180) = [protein]-peptidylproline (omega=0). Involved in protein export. Acts as a chaperone by maintaining the newly synthesized protein in an open conformation. Functions as a peptidyl-prolyl cis-trans isomerase. The polypeptide is Trigger factor (Streptomyces avermitilis (strain ATCC 31267 / DSM 46492 / JCM 5070 / NBRC 14893 / NCIMB 12804 / NRRL 8165 / MA-4680)).